Reading from the N-terminus, the 164-residue chain is Ribosome maturation factor RimM (164 aa).

The PRC barrel domain occupies 90 to 161 (KGSYFIADLI…TVTIKPLEIW (72 aa)).

The protein belongs to the RimM family. Binds ribosomal protein uS19.

It localises to the cytoplasm. Functionally, an accessory protein needed during the final step in the assembly of 30S ribosomal subunit, possibly for assembly of the head region. Essential for efficient processing of 16S rRNA. May be needed both before and after RbfA during the maturation of 16S rRNA. It has affinity for free ribosomal 30S subunits but not for 70S ribosomes. This is Ribosome maturation factor RimM from Clostridium botulinum (strain Langeland / NCTC 10281 / Type F).